Here is a 1794-residue protein sequence, read N- to C-terminus: MSYPNQMNGSMYGYGANNGVQPGFDSYGMPINQGGMNYQQQTYPYQQPYQPDGYAGNTMLPFQQSQPATQFNNGFGYASQPTGSVADYGQQQQQMYGYNGMMPQTMNNTGFMQPQQTGAIPGFAPQPTGFVQPQPTGFMSQQPASFMQPQRTGGAGFIQPQRTGAMPAYQPQMNNFMQPQKTGGFAPQATGFMQTQPFGAAPSFAPQPTGFVQPQQTGVVMPPQPTGYLQAQPTGPFASFVQPQQTASFMPAAQPLKPQKTGQIHNSKAMDTRLSFVSAADQAKFEQLFKSAVGREEAMSSEIGKAILVRSKLPTVQLSKIWRLSDTTRSGRLLFPQFVLAMYLCNLGLTGKPIPDKVPDGILNEVNAMVDAISFSLDENYAKPTQPIPQAAAQQMAAQMFGGFQQAAGIPSQITGFQPQAMMPQRTGMQPQMTGFQQPMIPQRTGMQPQMTGFQQPMMPQRTGLQPQMTGFQQPMVPQRTGMQPQMTGFQQPMMPQRTGLQPQMTGFQQPMVPQRTGMQPMMPGLQQPMAPQRTGMQPMMPQRTGMQPQMTGFQQPMAPQRTGMQPMMPQRTGMQPQMPGMQQPMAPQRTGMQPMMPQRTGMQQPMAPQRTGMQPMMPQRTGMQPQMPGMQQPMAPQRTGMQPMMPQRTGMQPQMPGMQQPMAPQRTGMQPMAPQRTGMQPMMPQRTGMQPQMPGMQQPMAPQRTGMQPMMPQRTGMQPQMPGMQQPMAPQRTGMQPMAPQRTGMQPQMTGGPMLPQRTGGMAPQPTGMPGQWGFINTPLSNLPGIEALGQQMMPNAPSGGLNNTFQQKKDIPWAISKEEKRIYDQIFDAWDKERKGTLGGNAVLEIFGQSKLTRTELEHIWNLCDHGDKGSLDRDEFAVALHLIYRKLNGNEVPAVLPPELIPPSTRNFTESLNQVKNLIKNDTSNRKPFGAENQSKLKKNSFYDNPSETTEKDATLYRHNDSDASAYVSSARRRDFKEEKIESAPPIINDIDSEIASLKKRIHEKSLVVNALEDKKLAATPANDVQNDSLIYRIKSVQDEINRLSTSNKSPEVASMNVRLEELSTRVSKMLSDINEVDHTIASLSLKLFQAEDTKNSYDQTSPEATQERNRTISSKLAEMEKQKNESKAALEQMKNYVTNIENNIRAKLLPSAANDDAWLSQNVVDESVTRVVKELPVPAPAAPQTLNPPSVSTVQQSKPIESNTHTPEVKATSESPSASSNLEDRAARIKAEAQRRMNERLAALGIKPRQKGTPSPAPVNSATSTPVAAPTAQQIQPGKQASAVSSNVPAVSASISTPPAVVPTVQHPQPTKQIPTAAVKDPSTTSTSFNTAPIPQQAPLENQFSKMSLEPPVRPAVPTSPKPQIPDSSNVHAPPPPVQPMNAMPSHNAVNARPSAPERRDSFGSVSSGSNVSSIEDETSTMPLKASQPTNPGAPSNHAPQVVPPAPMHAVAPVQPKAPGMVTNAPAPSSAPAPPAPVSQLPPAVPNVPVPSMIPSVAQQPPSSVAPATAPSSTLPPSQSSFAHVPSPAPPAPQHPSAAALSSAPADNSMPHRSSPYAPQEPVQKPQAINNIAPATNLGTSQSFSPRMGPVNNSGSPLAMNAAGQPSLAVPAVPSAPSNHFNPFAKMQPPAPSPLQPSGHDSDNWSQHGDEEEEDSEDDIRSSKDAAALAAKLFGGMAPAHPVSTPPVRPQSAAPPQMSAPTPPPPPMSVPPPPSAPPMPAGPPSAPPPPLPASSAPSVPNPGDRSALLQQIHTGTRLKKTVTTDKSKPIAGRVLDASDGNSSAWYGNLS.

Threonine 152 bears the Phosphothreonine mark. Positions 281–369 (DQAKFEQLFK…DGILNEVNAM (89 aa)) constitute an EH 1 domain. In terms of domain architecture, EF-hand 1 spans 313–348 (LPTVQLSKIWRLSDTTRSGRLLFPQFVLAMYLCNLG). A compositionally biased stretch (low complexity) spans 651-666 (GMQPQMPGMQQPMAPQ). Positions 651–674 (GMQPQMPGMQQPMAPQRTGMQPMA) are disordered. Phosphothreonine is present on threonine 706. The span at 717–732 (GMQPQMPGMQQPMAPQ) shows a compositional bias: low complexity. The interval 717–747 (GMQPQMPGMQQPMAPQRTGMQPMAPQRTGMQ) is disordered. Positions 821–910 (EKRIYDQIFD…PELIPPSTRN (90 aa)) constitute an EH 2 domain. One can recognise an EF-hand 2 domain in the interval 854–889 (LTRTELEHIWNLCDHGDKGSLDRDEFAVALHLIYRK). The segment at 925 to 956 (DTSNRKPFGAENQSKLKKNSFYDNPSETTEKD) is disordered. The stretch at 1107 to 1151 (EATQERNRTISSKLAEMEKQKNESKAALEQMKNYVTNIENNIRAK) forms a coiled coil. Disordered regions lie at residues 1183-1227 (APAA…SNLE), 1249-1287 (GIKPRQKGTPSPAPVNSATSTPVAAPTAQQIQPGKQASA), and 1303-1794 (PAVV…GNLS). The segment covering 1188–1225 (QTLNPPSVSTVQQSKPIESNTHTPEVKATSESPSASSN) has biased composition (polar residues). 2 positions are modified to phosphoserine: serine 1219 and serine 1221. A compositionally biased stretch (low complexity) spans 1265–1276 (SATSTPVAAPTA). Over residues 1326-1350 (PSTTSTSFNTAPIPQQAPLENQFSK) the composition is skewed to polar residues. Over residues 1356 to 1368 (PVRPAVPTSPKPQ) the composition is skewed to pro residues. A phosphoserine mark is found at serine 1406, serine 1409, serine 1412, and serine 1414. Low complexity-rich tracts occupy residues 1407–1418 (FGSVSSGSNVSS), 1499–1530 (PSVAQQPPSSVAPATAPSSTLPPSQSSFAHVP), and 1539–1553 (HPSAAALSSAPADNS). Polar residues predominate over residues 1571-1600 (QAINNIAPATNLGTSQSFSPRMGPVNNSGS). 2 stretches are compositionally biased toward low complexity: residues 1610–1622 (PSLAVPAVPSAPS) and 1694–1704 (PQSAAPPQMSA). The segment covering 1705–1736 (PTPPPPPMSVPPPPSAPPMPAGPPSAPPPPLP) has biased composition (pro residues). Residues 1737–1746 (ASSAPSVPNP) show a composition bias toward low complexity. One can recognise a WH2 domain in the interval 1748–1765 (DRSALLQQIHTGTRLKKT). Polar residues predominate over residues 1783 to 1794 (DGNSSAWYGNLS).

This sequence belongs to the PAN1 family. As to quaternary structure, component of the PAN1 actin cytoskeleton-regulatory complex.

Its subcellular location is the cell membrane. It localises to the endosome membrane. The protein localises to the cytoplasm. It is found in the cytoskeleton. The protein resides in the actin patch. In terms of biological role, component of the PAN1 actin cytoskeleton-regulatory complex required for the internalization of endosomes during actin-coupled endocytosis. The complex links the site of endocytosis to the cell membrane-associated actin cytoskeleton. Mediates uptake of external molecules and vacuolar degradation of plasma membrane proteins. Plays a role in the proper organization of the cell membrane-associated actin cytoskeleton and promotes its destabilization. In Schizosaccharomyces pombe (strain 972 / ATCC 24843) (Fission yeast), this protein is Actin cytoskeleton-regulatory complex protein pan1 (pan1).